We begin with the raw amino-acid sequence, 616 residues long: Chaperone protein HscA (616 aa).

This sequence belongs to the heat shock protein 70 family.

Functionally, chaperone involved in the maturation of iron-sulfur cluster-containing proteins. Has a low intrinsic ATPase activity which is markedly stimulated by HscB. Involved in the maturation of IscU. This is Chaperone protein HscA from Salmonella typhimurium (strain LT2 / SGSC1412 / ATCC 700720).